The following is a 213-amino-acid chain: MAKLNVNPTRMELSKLKKRLTTSTRSHKLLKDKQDELMRQFINLVKYNNKLRKEVEDNLQGSLKDFVMARAVMSSEFLEEAIVYPKEHISVEVGEKNVMSVSVPVMNFKRQLEGDEGSIYPYGFANTSSELDDTLSKLYEILPQLLELAEVEKSCQLMANEIESTRRRVNALEYMTIPQLQETIKYIRMRLDENERSATTRLMKVKSMIEQRG.

Belongs to the V-ATPase D subunit family.

Functionally, produces ATP from ADP in the presence of a proton gradient across the membrane. This is V-type ATP synthase subunit D from Clostridium botulinum (strain Alaska E43 / Type E3).